Here is a 76-residue protein sequence, read N- to C-terminus: ISGPWSDFFRALGAVILYLMTSIVVLVERGNNSKGAAGVLGLCAAGLFGYDAYITFPSGTRRHTAAPTDPADGPVR.

The MARVEL domain maps to 1–60; sequence ISGPWSDFFRALGAVILYLMTSIVVLVERGNNSKGAAGVLGLCAAGLFGYDAYITFPSGT. The helical transmembrane segment at 8–28 threads the bilayer; it reads FFRALGAVILYLMTSIVVLVE. Asn31 is a glycosylation site (N-linked (GlcNAc...) asparagine). The helical transmembrane segment at 36-56 threads the bilayer; sequence AAGVLGLCAAGLFGYDAYITF.

The protein resides in the membrane. Functionally, may play a role in cell differentiation in the intestinal epithelium. The sequence is that of Proteolipid protein 2 (PLP2) from Ovis aries (Sheep).